Here is a 192-residue protein sequence, read N- to C-terminus: 7-methyl-GTP pyrophosphatase (192 aa).

The active-site Proton acceptor is the aspartate 69.

It belongs to the Maf family. YceF subfamily. The cofactor is a divalent metal cation.

It is found in the cytoplasm. It carries out the reaction N(7)-methyl-GTP + H2O = N(7)-methyl-GMP + diphosphate + H(+). In terms of biological role, nucleoside triphosphate pyrophosphatase that hydrolyzes 7-methyl-GTP (m(7)GTP). May have a dual role in cell division arrest and in preventing the incorporation of modified nucleotides into cellular nucleic acids. This is 7-methyl-GTP pyrophosphatase from Pseudomonas fluorescens (strain Pf0-1).